The following is a 241-amino-acid chain: Carboxy-S-adenosyl-L-methionine synthase (241 aa).

S-adenosyl-L-methionine-binding positions include Tyr-38, 63–65 (GCS), 88–89 (DN), 116–117 (DI), Asn-131, and Arg-198.

This sequence belongs to the class I-like SAM-binding methyltransferase superfamily. Cx-SAM synthase family. Homodimer.

The enzyme catalyses prephenate + S-adenosyl-L-methionine = carboxy-S-adenosyl-L-methionine + 3-phenylpyruvate + H2O. In terms of biological role, catalyzes the conversion of S-adenosyl-L-methionine (SAM) to carboxy-S-adenosyl-L-methionine (Cx-SAM). This chain is Carboxy-S-adenosyl-L-methionine synthase, found in Actinobacillus pleuropneumoniae serotype 5b (strain L20).